Consider the following 233-residue polypeptide: Large ribosomal subunit protein uL1 (233 aa).

This sequence belongs to the universal ribosomal protein uL1 family. Part of the 50S ribosomal subunit.

Functionally, binds directly to 23S rRNA. The L1 stalk is quite mobile in the ribosome, and is involved in E site tRNA release. In terms of biological role, protein L1 is also a translational repressor protein, it controls the translation of the L11 operon by binding to its mRNA. This chain is Large ribosomal subunit protein uL1, found in Vibrio vulnificus (strain CMCP6).